Here is a 904-residue protein sequence, read N- to C-terminus: MGSLRFSIPLDPFDSKRKRFHFSANPSQFPDQFPIHFVTSSIHATRASSIGSSTRVLDKIRVSSLGTEANENAINSASAAPVERSRSSKLSGDQRGTKKYVARKFSFRRGSNDLELENLFVNNGEIDVNYSAIKPGQSLEHCNGILKRLESCSDTNAIKFFDWMRCNGKLVGNFVAYSLILRVLGRREEWDRAEDLIKELCGFHEFQKSYQVFNTVIYACTKKGNVKLASKWFHMMLEFGVRPNVATIGMLMGLYQKNWNVEEAEFAFSHMRKFGIVCESAYSSMITIYTRLRLYDKAEEVIDLMKQDRVRLKLENWLVMLNAYSQQGKMELAESILVSMEAAGFSPNIIAYNTLITGYGKIFKMEAAQGLFHRLCNIGLEPDETSYRSMIEGWGRADNYEEAKHYYQELKRCGYKPNSFNLFTLINLQAKYGDRDGAIKTIEDMTGIGCQYSSILGIILQAYEKVGKIDVVPCVLKGSFHNHIRLNQTSFSSLVMAYVKHGMVDDCLGLLREKKWRDSAFESHLYHLLICSCKESGQLTDAVKIYNHKMESDEEINLHITSTMIDIYTVMGEFSEAEKLYLNLKSSGVVLDRIGFSIVVRMYVKAGSLEEACSVLEIMDEQKDIVPDVYLFRDMLRIYQKCDLQDKLQHLYYRIRKSGIHWNQEMYNCVINCCARALPLDELSGTFEEMIRYGFTPNTVTFNVLLDVYGKAKLFKKVNELFLLAKRHGVVDVISYNTIIAAYGKNKDYTNMSSAIKNMQFDGFSVSLEAYNTLLDAYGKDKQMEKFRSILKRMKKSTSGPDHYTYNIMINIYGEQGWIDEVADVLKELKESGLGPDLCSYNTLIKAYGIGGMVEEAVGLVKEMRGRNIIPDKVTYTNLVTALRRNDEFLEAIKWSLWMKQMGI.

The transit peptide at 1-61 (MGSLRFSIPL…SSTRVLDKIR (61 aa)) directs the protein to the chloroplast. Residues 75-94 (NSASAAPVERSRSSKLSGDQ) form a disordered region. 20 PPR repeats span residues 173 to 203 (NFVA…LCGF), 209 to 243 (SYQV…GVRP), 244 to 274 (NVAT…MRKF), 278 to 312 (CESA…RVRL), 313 to 347 (KLEN…GFSP), 348 to 382 (NIIA…GLEP), 383 to 417 (DETS…GYKP), 418 to 452 (NSFN…GCQY), 487 to 521 (NQTS…DSAF), 522 to 553 (ESHL…MESD), 557 to 591 (NLHI…GVVL), 592 to 622 (DRIG…MDEQ), 628 to 662 (DVYL…GIHW), 663 to 697 (NQEM…GFTP), 698 to 732 (NTVT…GVVD), 733 to 766 (VISY…GFSV), 767 to 801 (SLEA…TSGP), 802 to 836 (DHYT…GLGP), 837 to 871 (DLCS…NIIP), and 872 to 904 (DKVT…QMGI).

This sequence belongs to the PPR family. P subfamily.

It is found in the plastid. It localises to the chloroplast. This Arabidopsis thaliana (Mouse-ear cress) protein is Pentatricopeptide repeat-containing protein At4g30825, chloroplastic.